The primary structure comprises 433 residues: PBSX phage terminase large subunit (433 aa).

To B.subtilis YqaT and phage SPP1 terminase large subunit. As to quaternary structure, dimer of a small and a large subunit.

Functionally, functions as a terminase. This chain is PBSX phage terminase large subunit (xtmB), found in Bacillus subtilis (strain 168).